We begin with the raw amino-acid sequence, 383 residues long: Sulfate adenylyltransferase (383 aa).

This sequence belongs to the sulfate adenylyltransferase family.

The enzyme catalyses sulfate + ATP + H(+) = adenosine 5'-phosphosulfate + diphosphate. The protein operates within sulfur metabolism; hydrogen sulfide biosynthesis; sulfite from sulfate: step 1/3. The chain is Sulfate adenylyltransferase (sat) from Aeropyrum pernix (strain ATCC 700893 / DSM 11879 / JCM 9820 / NBRC 100138 / K1).